We begin with the raw amino-acid sequence, 237 residues long: Homeobox protein Nkx-3.1 (237 aa).

Basic and acidic residues predominate over residues 1 to 14 (MLRVAEPREPRVEA). Disordered regions lie at residues 1–96 (MLRV…EPES) and 108–130 (EHNPGDLASAPQVTKQPQKRSRA). Positions 24–34 (PTQSKRLTSFL) are enriched in polar residues. Composition is skewed to basic and acidic residues over residues 38–47 (ILRDRAERHG) and 57–71 (PDPRRDSAPEPDKAG). The homeobox DNA-binding region spans 125 to 184 (QKRSRAAFSHTQVIELERKFSHQKYLSAPERAHLAKNLKLTETQVKIWFQNRRYKTKRKQ).

This sequence belongs to the NK-3 homeobox family. In terms of assembly, interacts with serum response factor (SRF). Interacts with SPDEF. Interacts with WDR77. Interacts with TOPORS which polyubiquitinates NKX3-1 and induces its proteasomal degradation. Interacts with FEM1B. Post-translationally, ubiquitinated by TOPORS; monoubiquitinated at several residues and also polyubiquitinated on single residues. Expressed mostly in the male urogenital tract, with highest expression in the epithelial cells lining the ducts of anterior, dorsolateral and ventral prostate and in the bulbourethral gland, and much lower in the seminal vesicle and the testis. Expression in the prostate increases during sexual maturation and is drastically reduced following castration. Expressed also in brain (hippocampus and external granular layer of the cerebral cortex), kidney (intralobular arteries), thymus and adrenal and salivary glands.

Its subcellular location is the nucleus. Its function is as follows. Transcription factor, which binds preferentially the consensus sequence 5'-TAAGT[AG]-3' and can behave as a transcriptional repressor. Plays an important role in normal prostate development, regulating proliferation of glandular epithelium and in the formation of ducts in prostate. Acts as a tumor suppressor controlling prostate carcinogenesis, as shown by the ability to suppress growth and tumorigenicity of prostate carcinoma cells. Plays a role in the formation of minor salivary glands (particularly palatine and lingual glands). The sequence is that of Homeobox protein Nkx-3.1 from Mus musculus (Mouse).